A 464-amino-acid polypeptide reads, in one-letter code: Glutamyl-tRNA reductase (464 aa).

Substrate is bound by residues 47–50, Ser145, 150–152, and Gln156; these read TCNR and EPQ. The Nucleophile role is filled by Cys48. 225–230 lines the NADP(+) pocket; that stretch reads AAGEMN.

Belongs to the glutamyl-tRNA reductase family. In terms of assembly, homodimer.

The catalysed reaction is (S)-4-amino-5-oxopentanoate + tRNA(Glu) + NADP(+) = L-glutamyl-tRNA(Glu) + NADPH + H(+). It participates in porphyrin-containing compound metabolism; protoporphyrin-IX biosynthesis; 5-aminolevulinate from L-glutamyl-tRNA(Glu): step 1/2. In terms of biological role, catalyzes the NADPH-dependent reduction of glutamyl-tRNA(Glu) to glutamate 1-semialdehyde (GSA). The protein is Glutamyl-tRNA reductase of Psychrobacter cryohalolentis (strain ATCC BAA-1226 / DSM 17306 / VKM B-2378 / K5).